A 404-amino-acid polypeptide reads, in one-letter code: Cytochrome P450 monooxygenase avaI (404 aa).

Residue C382 participates in heme binding.

It belongs to the cytochrome P450 family. The cofactor is heme.

The protein operates within secondary metabolite biosynthesis. In terms of biological role, cytochrome P450 monooxygenase; part of the cluster that mediates the biosynthesis of a highly modified cyclo-arginine-tryptophan dipeptide (cRW). The first step of the pathway is perfornmed by the arginine-containing cyclodipeptide synthase (RCPDS) avaA that acts as the scaffold-generating enzyme and is responsible for formation of the cyclo-Arg-Trp (cRW) diketopiperazine. AvaB then acts as a multifunctional flavoenzyme that is responsible for generating the cyclo-Arg-formylkynurenine DKP, which can be deformylated by avaC. AvaB then further catalyzes an additional N-oxidation followed by cyclization and dehydration. The next step is an N-acetylation of the guanidine group catalyzed by the arginine N-acetyltransferase avaD. The roles of the additional enzymes identified within the ava cluster still have to be determined. The chain is Cytochrome P450 monooxygenase avaI from Aspergillus versicolor.